The sequence spans 881 residues: Phosphoenolpyruvate carboxylase (881 aa).

Residues H138 and K545 contribute to the active site.

This sequence belongs to the PEPCase type 1 family. Mg(2+) is required as a cofactor.

It catalyses the reaction oxaloacetate + phosphate = phosphoenolpyruvate + hydrogencarbonate. Functionally, forms oxaloacetate, a four-carbon dicarboxylic acid source for the tricarboxylic acid cycle. The sequence is that of Phosphoenolpyruvate carboxylase from Shewanella oneidensis (strain ATCC 700550 / JCM 31522 / CIP 106686 / LMG 19005 / NCIMB 14063 / MR-1).